The primary structure comprises 389 residues: 8-amino-7-oxononanoate synthase (389 aa).

R31 contacts substrate. 109-110 lines the pyridoxal 5'-phosphate pocket; that stretch reads GY. H134 lines the substrate pocket. Pyridoxal 5'-phosphate is bound by residues S180, 205–208, and 236–239; these read DEAH and TLSK. The residue at position 239 (K239) is an N6-(pyridoxal phosphate)lysine. T349 contributes to the substrate binding site.

This sequence belongs to the class-II pyridoxal-phosphate-dependent aminotransferase family. BioF subfamily. As to quaternary structure, homodimer. Pyridoxal 5'-phosphate is required as a cofactor.

The catalysed reaction is 6-carboxyhexanoyl-[ACP] + L-alanine + H(+) = (8S)-8-amino-7-oxononanoate + holo-[ACP] + CO2. It functions in the pathway cofactor biosynthesis; biotin biosynthesis. Functionally, catalyzes the decarboxylative condensation of pimeloyl-[acyl-carrier protein] and L-alanine to produce 8-amino-7-oxononanoate (AON), [acyl-carrier protein], and carbon dioxide. This Mycobacterium ulcerans (strain Agy99) protein is 8-amino-7-oxononanoate synthase.